Here is a 1400-residue protein sequence, read N- to C-terminus: ABC transporter G family member 30 (1400 aa).

N116 carries an N-linked (GlcNAc...) asparagine glycan. The 274-residue stretch at 141–414 (LLSEFICSKK…FEEFGFKCPE (274 aa)) folds into the ABC transporter 1 domain. An ATP-binding site is contributed by 174–181 (GPPGCGKT). A glycan (N-linked (GlcNAc...) asparagine) is linked at N472. Residues 492–704 (EMLKACSRRE…AEIGLTANEF (213 aa)) enclose the ABC transmembrane type-2 1 domain. 7 helical membrane passes run 510-530 (FIYL…MTVF), 553-573 (LFRL…RLGV), 582-602 (FYPA…LSVL), 628-648 (FLIL…IAAI), 652-672 (IIAS…FGGF), 679-699 (MPAW…EIGL), and 738-758 (TAFG…VLAL). In terms of domain architecture, ABC transporter 2 spans 808–1053 (VTFQNVQYYI…VIEYFESFSG (246 aa)). An ATP-binding site is contributed by 845-852 (GVSGAGKT). N-linked (GlcNAc...) asparagine glycosylation is found at N899 and N1040. Positions 1125–1339 (VQLKACLWKQ…VLEGLLSSQY (215 aa)) constitute an ABC transmembrane type-2 2 domain. The next 7 membrane-spanning stretches (helical) occupy residues 1144 to 1164 (HNIT…LLFW), 1179 to 1199 (IFGS…AAVI), 1228 to 1248 (VLIE…IVYP), 1263 to 1283 (LYSI…MVAL), 1289 to 1309 (MAVT…GFVI), 1317 to 1337 (WWIW…LLSS), and 1372 to 1392 (VVAF…AFFM).

The protein belongs to the ABC transporter superfamily. ABCG family. PDR (TC 3.A.1.205) subfamily. Confined to roots. In seeds, mainly expressed in the embryo and, to a lesser extent, in the endosperm.

Its subcellular location is the cell membrane. The catalysed reaction is abscisate(out) + ATP + H2O = abscisate(in) + ADP + phosphate + H(+). In terms of biological role, together with ABCG40, import into the embryo the abscisic acid (ABA) delivered from the endosperm via ABCG25 and ABCG31-mediated export to suppress radicle extension and subsequent embryonic growth. Involved in root secretion of phytochemicals (phenolics and sugars) which regulate soil microbiota, influencing both fungal and bacterial communities. May be a general defense protein. The protein is ABC transporter G family member 30 of Arabidopsis thaliana (Mouse-ear cress).